The sequence spans 133 residues: ATP synthase epsilon chain, sodium ion specific (133 aa).

This sequence belongs to the ATPase epsilon chain family. F-type ATPases have 2 components, CF(1) - the catalytic core - and CF(0) - the membrane proton channel. CF(1) has five subunits: alpha(3), beta(3), gamma(1), delta(1), epsilon(1). CF(0) has three main subunits: a, b and c.

It localises to the cell membrane. Its activity is regulated as follows. Inhibited by nitrate. Its function is as follows. Produces ATP from ADP in the presence of a sodium gradient across the membrane. The sequence is that of ATP synthase epsilon chain, sodium ion specific (atpC) from Acetobacterium woodii (strain ATCC 29683 / DSM 1030 / JCM 2381 / KCTC 1655 / WB1).